The primary structure comprises 1038 residues: DNA polymerase delta catalytic subunit (1038 aa).

The segment at 1-29 (MSHSIPITSSPPPALKKLKLPNGSEEPSE) is disordered. Zn(2+)-binding residues include Cys942, Cys945, Cys958, and Cys961. Residues 942–961 (CVSCRTPLKKDNLGALCPNC) form a CysA-type zinc finger. The [4Fe-4S] cluster site is built by Cys992, Cys995, Cys1005, and Cys1010. Positions 992-1010 (CQRCQGSLHQEVLCSNKDC) match the CysB motif motif.

The protein belongs to the DNA polymerase type-B family. Heterodimer with subunits of 125 kDa and 50 kDa. The 125 kDa subunit contains the polymerase active site and most likely the active site for the 3'-5' exonuclease activity. It depends on [4Fe-4S] cluster as a cofactor.

The protein localises to the nucleus. The enzyme catalyses DNA(n) + a 2'-deoxyribonucleoside 5'-triphosphate = DNA(n+1) + diphosphate. Its function is as follows. This polymerase possesses two enzymatic activities: DNA synthesis (polymerase) and an exonucleolytic activity that degrades single-stranded DNA in the 3'- to 5'-direction. This is DNA polymerase delta catalytic subunit (POL3) from Candida albicans (Yeast).